The primary structure comprises 209 residues: Small ribosomal subunit protein uS4 (209 aa).

Residues 99–164 (TRLDNVVYRM…IPRVQELKEL (66 aa)) form the S4 RNA-binding domain.

This sequence belongs to the universal ribosomal protein uS4 family. Part of the 30S ribosomal subunit. Contacts protein S5. The interaction surface between S4 and S5 is involved in control of translational fidelity.

In terms of biological role, one of the primary rRNA binding proteins, it binds directly to 16S rRNA where it nucleates assembly of the body of the 30S subunit. Its function is as follows. With S5 and S12 plays an important role in translational accuracy. This chain is Small ribosomal subunit protein uS4, found in Natranaerobius thermophilus (strain ATCC BAA-1301 / DSM 18059 / JW/NM-WN-LF).